Consider the following 231-residue polypeptide: MLEQLKADVLAANLALPAHHLVTFTWGNVSAVDETRQWMVIKPSGVEYDVMTADDMVVVEIASGKVVEGSKKPSSDTPTHLALYRRYAEIGGIVHTHSRHATIWSQAGLDLPAWGTTHADYFYGAIPCTRQMTAEEINGEYEYQTGEVIIETFEERGRSPAQIPAVLVHSHGPFAWGKNAADAVHNAVVLEECAYMGLFSRQLAPQLPAMQNELLDKHYLRKHGANAYYGQ.

Residues 27–28, 44–45, and 74–75 contribute to the substrate site; these read GN, SG, and SS. The Zn(2+) site is built by D76, H95, and H97. D120 (proton donor/acceptor) is an active-site residue. H171 provides a ligand contact to Zn(2+). The active-site Proton donor/acceptor is the Y229.

Belongs to the aldolase class II family. AraD/FucA subfamily. It depends on Zn(2+) as a cofactor.

The catalysed reaction is L-ribulose 5-phosphate = D-xylulose 5-phosphate. In terms of biological role, catalyzes the interconversion of L-ribulose 5-phosphate (LRu5P) and D-xylulose 5-phosphate (D-Xu5P) via a retroaldol/aldol mechanism (carbon-carbon bond cleavage analogous to a class II aldolase reaction). May be involved in the utilization of 2,3-diketo-L-gulonate. The polypeptide is L-ribulose-5-phosphate 4-epimerase SgbE (Escherichia coli (strain K12)).